Reading from the N-terminus, the 247-residue chain is Phosphoribosylaminoimidazole-succinocarboxamide synthase (247 aa).

Belongs to the SAICAR synthetase family.

It carries out the reaction 5-amino-1-(5-phospho-D-ribosyl)imidazole-4-carboxylate + L-aspartate + ATP = (2S)-2-[5-amino-1-(5-phospho-beta-D-ribosyl)imidazole-4-carboxamido]succinate + ADP + phosphate + 2 H(+). Its pathway is purine metabolism; IMP biosynthesis via de novo pathway; 5-amino-1-(5-phospho-D-ribosyl)imidazole-4-carboxamide from 5-amino-1-(5-phospho-D-ribosyl)imidazole-4-carboxylate: step 1/2. This Herpetosiphon aurantiacus (strain ATCC 23779 / DSM 785 / 114-95) protein is Phosphoribosylaminoimidazole-succinocarboxamide synthase.